The chain runs to 127 residues: Fumarate reductase subunit C (127 aa).

3 consecutive transmembrane segments (helical) span residues 30 to 50 (ATVL…GSLV), 67 to 87 (IVVA…QTFF), and 107 to 127 (VVVL…LVIV).

This sequence belongs to the FrdC family. In terms of assembly, part of an enzyme complex containing four subunits: a flavoprotein (FrdA), an iron-sulfur protein (FrdB), and two hydrophobic anchor proteins (FrdC and FrdD).

It is found in the cell inner membrane. In terms of biological role, anchors the catalytic components of the fumarate reductase complex to the cell membrane, binds quinones. The sequence is that of Fumarate reductase subunit C from Aliivibrio fischeri (strain ATCC 700601 / ES114) (Vibrio fischeri).